A 206-amino-acid chain; its full sequence is Uridine kinase (206 aa).

9 to 16 contacts ATP; that stretch reads GGSGSGKT.

This sequence belongs to the uridine kinase family.

It is found in the cytoplasm. The enzyme catalyses uridine + ATP = UMP + ADP + H(+). The catalysed reaction is cytidine + ATP = CMP + ADP + H(+). The protein operates within pyrimidine metabolism; CTP biosynthesis via salvage pathway; CTP from cytidine: step 1/3. It functions in the pathway pyrimidine metabolism; UMP biosynthesis via salvage pathway; UMP from uridine: step 1/1. The chain is Uridine kinase from Borrelia garinii subsp. bavariensis (strain ATCC BAA-2496 / DSM 23469 / PBi) (Borreliella bavariensis).